The chain runs to 528 residues: (R)-citramalate synthase (528 aa).

The 263-residue stretch at 4–266 (VKLYDTTLRD…RECIGDDQLR (263 aa)) folds into the Pyruvate carboxyltransferase domain.

This sequence belongs to the alpha-IPM synthase/homocitrate synthase family.

The enzyme catalyses pyruvate + acetyl-CoA + H2O = (3R)-citramalate + CoA + H(+). The protein operates within amino-acid biosynthesis; L-isoleucine biosynthesis; 2-oxobutanoate from pyruvate: step 1/3. In terms of biological role, catalyzes the condensation of pyruvate and acetyl-coenzyme A to form (R)-citramalate. Makes part of the main pathway for isoleucine biosynthesis in G.sulfurreducens, i.e. the citramalate-dependent pathway. The sequence is that of (R)-citramalate synthase from Geobacter sulfurreducens (strain ATCC 51573 / DSM 12127 / PCA).